The following is an 811-amino-acid chain: Protein MEI2-like 5 (811 aa).

2 consecutive RRM domains span residues 193–266 (RTLF…YSIP) and 278–351 (GTLV…PSRP). The tract at residues 371–397 (TKHNSFQIGSPSANSPPSLWSQLGSPT) is disordered. Residues 374 to 397 (NSFQIGSPSANSPPSLWSQLGSPT) show a composition bias toward polar residues.

Probable RNA-binding protein that may play a role in growth regulation. The chain is Protein MEI2-like 5 (ML5) from Oryza sativa subsp. japonica (Rice).